The sequence spans 244 residues: Eukaryotic translation initiation factor 6 (244 aa).

This sequence belongs to the eIF-6 family. As to quaternary structure, monomer. Associates with the 60S ribosomal subunit.

It localises to the cytoplasm. The protein resides in the nucleus. It is found in the nucleolus. Functionally, binds to the 60S ribosomal subunit and prevents its association with the 40S ribosomal subunit to form the 80S initiation complex in the cytoplasm. May also be involved in ribosome biogenesis. The sequence is that of Eukaryotic translation initiation factor 6 (eif6) from Dictyostelium discoideum (Social amoeba).